The primary structure comprises 377 residues: Homoserine O-succinyltransferase (377 aa).

Positions 50–358 constitute an AB hydrolase-1 domain; sequence NAILVCHALS…PSTYGHDSFL (309 aa). The Nucleophile role is filled by serine 156. Arginine 226 serves as a coordination point for substrate. Active-site residues include aspartate 321 and histidine 354. Residue aspartate 355 participates in substrate binding.

Belongs to the AB hydrolase superfamily. MetX family. As to quaternary structure, homodimer.

The protein localises to the cytoplasm. The enzyme catalyses L-homoserine + succinyl-CoA = O-succinyl-L-homoserine + CoA. Its pathway is amino-acid biosynthesis; L-methionine biosynthesis via de novo pathway; O-succinyl-L-homoserine from L-homoserine: step 1/1. Its function is as follows. Transfers a succinyl group from succinyl-CoA to L-homoserine, forming succinyl-L-homoserine. The chain is Homoserine O-succinyltransferase from Nitrosomonas eutropha (strain DSM 101675 / C91 / Nm57).